We begin with the raw amino-acid sequence, 532 residues long: Protoporphyrinogen oxidase (532 aa).

FAD is bound by residues 9–14 (GSGISG), Ile289, and 511–513 (VGI).

Belongs to the protoporphyrinogen/coproporphyrinogen oxidase family. Protoporphyrinogen oxidase subfamily. FAD is required as a cofactor.

It localises to the mitochondrion. The catalysed reaction is protoporphyrinogen IX + 3 O2 = protoporphyrin IX + 3 H2O2. It participates in porphyrin-containing compound metabolism; protoporphyrin-IX biosynthesis; protoporphyrin-IX from protoporphyrinogen-IX: step 1/1. Its function is as follows. Catalyzes the 6-electron oxidation of protoporphyrinogen-IX to form protoporphyrin-IX. In Dictyostelium discoideum (Social amoeba), this protein is Protoporphyrinogen oxidase (ppox).